The following is a 210-amino-acid chain: NDR1/HIN1-like protein 12 (210 aa).

The chain crosses the membrane as a helical span at residues 23 to 43; the sequence is GVIIGFIIIVLITIFLVWIIL. The N-linked (GlcNAc...) asparagine glycan is linked to N61.

May form oligomers or be a component of larger protein complex in plasma membranes. In terms of tissue distribution, expressed in leaves, stems and flowers, and, to a lower extent, in siliques and roots.

It is found in the cell membrane. Its function is as follows. May play a role in plant immunity. This Arabidopsis thaliana (Mouse-ear cress) protein is NDR1/HIN1-like protein 12.